The chain runs to 336 residues: Protein-glutamate methylesterase/protein-glutamine glutaminase 1 (336 aa).

A Response regulatory domain is found at 2–119 (KIAIVNDMPL…GNPQEAAAPL (118 aa)). Asp53 carries the post-translational modification 4-aspartylphosphate. The region spanning 147–336 (TASRQRLVAI…APRLLEIFPK (190 aa)) is the CheB-type methylesterase domain. Catalysis depends on residues Ser159, His186, and Asp279.

This sequence belongs to the CheB family. Phosphorylated by CheA. Phosphorylation of the N-terminal regulatory domain activates the methylesterase activity.

The protein localises to the cytoplasm. It carries out the reaction [protein]-L-glutamate 5-O-methyl ester + H2O = L-glutamyl-[protein] + methanol + H(+). The catalysed reaction is L-glutaminyl-[protein] + H2O = L-glutamyl-[protein] + NH4(+). Its function is as follows. Involved in chemotaxis. Part of a chemotaxis signal transduction system that modulates chemotaxis in response to various stimuli. Catalyzes the demethylation of specific methylglutamate residues introduced into the chemoreceptors (methyl-accepting chemotaxis proteins or MCP) by CheR. Also mediates the irreversible deamidation of specific glutamine residues to glutamic acid. The protein is Protein-glutamate methylesterase/protein-glutamine glutaminase 1 of Pseudomonas fluorescens (strain Pf0-1).